The following is a 489-amino-acid chain: Betaine aldehyde dehydrogenase (489 aa).

2 residues coordinate K(+): threonine 26 and aspartate 93. 150-152 (GAW) contacts NAD(+). Lysine 162 (charge relay system) is an active-site residue. 176–179 (KPSE) provides a ligand contact to NAD(+). Valine 180 contacts K(+). Position 229–232 (229–232 (GVET)) interacts with NAD(+). Leucine 245 contacts K(+). Catalysis depends on glutamate 251, which acts as the Proton acceptor. NAD(+)-binding residues include glycine 253, cysteine 285, and glutamate 386. Residue cysteine 285 is the Nucleophile of the active site. Cysteine 285 carries the cysteine sulfenic acid (-SOH) modification. Residues lysine 456 and glycine 459 each coordinate K(+). Glutamate 463 acts as the Charge relay system in catalysis.

This sequence belongs to the aldehyde dehydrogenase family. In terms of assembly, dimer of dimers. The cofactor is K(+).

It carries out the reaction betaine aldehyde + NAD(+) + H2O = glycine betaine + NADH + 2 H(+). It participates in amine and polyamine biosynthesis; betaine biosynthesis via choline pathway; betaine from betaine aldehyde: step 1/1. Functionally, involved in the biosynthesis of the osmoprotectant glycine betaine. Catalyzes the irreversible oxidation of betaine aldehyde to the corresponding acid. This Burkholderia pseudomallei (strain 668) protein is Betaine aldehyde dehydrogenase.